We begin with the raw amino-acid sequence, 713 residues long: Phosphoribosylformylglycinamidine synthase subunit PurL (713 aa).

H34 is a catalytic residue. The ATP site is built by Y37 and R73. E75 lines the Mg(2+) pocket. Residues 76 to 79 (SHNH) and R98 each bind substrate. The active-site Proton acceptor is H77. A Mg(2+)-binding site is contributed by D99. Q221 lines the substrate pocket. D249 contributes to the Mg(2+) binding site. 292 to 294 (ESQ) is a substrate binding site. 2 residues coordinate ATP: D474 and G511. S514 contributes to the substrate binding site.

This sequence belongs to the FGAMS family. Monomer. Part of the FGAM synthase complex composed of 1 PurL, 1 PurQ and 2 PurS subunits.

It is found in the cytoplasm. The enzyme catalyses N(2)-formyl-N(1)-(5-phospho-beta-D-ribosyl)glycinamide + L-glutamine + ATP + H2O = 2-formamido-N(1)-(5-O-phospho-beta-D-ribosyl)acetamidine + L-glutamate + ADP + phosphate + H(+). The protein operates within purine metabolism; IMP biosynthesis via de novo pathway; 5-amino-1-(5-phospho-D-ribosyl)imidazole from N(2)-formyl-N(1)-(5-phospho-D-ribosyl)glycinamide: step 1/2. Functionally, part of the phosphoribosylformylglycinamidine synthase complex involved in the purines biosynthetic pathway. Catalyzes the ATP-dependent conversion of formylglycinamide ribonucleotide (FGAR) and glutamine to yield formylglycinamidine ribonucleotide (FGAM) and glutamate. The FGAM synthase complex is composed of three subunits. PurQ produces an ammonia molecule by converting glutamine to glutamate. PurL transfers the ammonia molecule to FGAR to form FGAM in an ATP-dependent manner. PurS interacts with PurQ and PurL and is thought to assist in the transfer of the ammonia molecule from PurQ to PurL. In Ignicoccus hospitalis (strain KIN4/I / DSM 18386 / JCM 14125), this protein is Phosphoribosylformylglycinamidine synthase subunit PurL.